Here is a 76-residue protein sequence, read N- to C-terminus: Omega-agatoxin-Aa3b (76 aa).

6 disulfide bridges follow: Cys2–Cys19, Cys9–Cys25, Cys16–Cys52, Cys18–Cys40, Cys27–Cys38, and Cys59–Cys67.

Belongs to the neurotoxin 04 (omega-agtx) family. 03 (type II/III omega-agtx) subfamily. In terms of tissue distribution, expressed by the venom gland.

Its subcellular location is the secreted. In terms of biological role, omega-agatoxins are antagonists of voltage-gated calcium channels. This toxin blocks calcium channels in insect central neurons but not at peripheral neuromuscular junctions. In vertebrates, it is broadly active against all high-threshold Cav1/CACNA1 channels and Cav2.2/CACNA1B channels. In Agelenopsis aperta (North American funnel-web spider), this protein is Omega-agatoxin-Aa3b.